The sequence spans 112 residues: MAGKTVTRADLAESVFRKVGLSRTESAELVETVIDEICNAIVRGEMVKLSSFATFQVRAKNERIGRNPKTGEEVPISPRKVMTFKASNVLKQRILRSHLARKAKQKPANPAA.

Belongs to the bacterial histone-like protein family. In terms of assembly, heterodimer of an alpha and a beta chain.

Its function is as follows. This protein is one of the two subunits of integration host factor, a specific DNA-binding protein that functions in genetic recombination as well as in transcriptional and translational control. The sequence is that of Integration host factor subunit alpha from Allorhizobium ampelinum (strain ATCC BAA-846 / DSM 112012 / S4) (Agrobacterium vitis (strain S4)).